We begin with the raw amino-acid sequence, 110 residues long: Large ribosomal subunit protein uL22 (110 aa).

Belongs to the universal ribosomal protein uL22 family. In terms of assembly, part of the 50S ribosomal subunit.

Functionally, this protein binds specifically to 23S rRNA; its binding is stimulated by other ribosomal proteins, e.g. L4, L17, and L20. It is important during the early stages of 50S assembly. It makes multiple contacts with different domains of the 23S rRNA in the assembled 50S subunit and ribosome. Its function is as follows. The globular domain of the protein is located near the polypeptide exit tunnel on the outside of the subunit, while an extended beta-hairpin is found that lines the wall of the exit tunnel in the center of the 70S ribosome. The chain is Large ribosomal subunit protein uL22 from Aliarcobacter butzleri (strain RM4018) (Arcobacter butzleri).